Consider the following 348-residue polypeptide: MVADVLRQSVLVPISMYPQYPVPRRYTTSVFKEYQKKKKIYYCQRCLNHDVPRPRKNHKCECPYADCTCEKCGLVEKRRILNIRLQNYNQFNIENENDSKLIIVEDDDKKKQGERVPNCQKCGQHGRKSRLKGHKRSCPFRECPCAKCAVVSERQKLMADQIKIRRRQRKDTLLTFAKNSITSTMFPSNQISLNALNSLLYGSINTSPQPLLSSPTSSDASSCSPSMPFTPSIPMFMPTSADCSPTTQTPTSSIPSSIASTSPLMTSLPLRLSGFPLLNIRDPSAEASLLNLGCNADAAALLKTILDQYRMLEEASMSMSSSPSKDDESGDEDSDGLNSNSIIDVITV.

2 consecutive DNA-binding regions (DM) follow at residues 43-91 and 119-166; these read CQRC…YNQF and CQKC…KIRR. Residues 316–348 are disordered; it reads SMSMSSSPSKDDESGDEDSDGLNSNSIIDVITV.

This sequence belongs to the DMRT family. In terms of tissue distribution, dimorphically expressed in the dimorphically connected interneuron AVG; expression is observed in the AVG in males, but not in hermaphrodites.

The protein resides in the nucleus. Its function is as follows. Transcription factor. Plays a role in neuronal signaling in polymodal sensory neuron ASH, downstream of sensory receptor activation. Required for maintenance of AVG synapses. This Caenorhabditis elegans protein is Doublesex- and mab-3-related transcription factor dmd-10.